Reading from the N-terminus, the 507-residue chain is Cysteine--tRNA ligase (507 aa).

Position 29 (C29) interacts with Zn(2+). The short motif at 31–41 is the 'HIGH' region element; it reads PTVYDVPHIGN. Positions 207, 232, and 236 each coordinate Zn(2+). The 'KMSKS' region motif lies at 265–269; sequence KMSKS. K268 lines the ATP pocket.

The protein belongs to the class-I aminoacyl-tRNA synthetase family. As to quaternary structure, monomer. The cofactor is Zn(2+).

It localises to the cytoplasm. The catalysed reaction is tRNA(Cys) + L-cysteine + ATP = L-cysteinyl-tRNA(Cys) + AMP + diphosphate. The polypeptide is Cysteine--tRNA ligase (Neorickettsia sennetsu (strain ATCC VR-367 / Miyayama) (Ehrlichia sennetsu)).